The sequence spans 233 residues: Hydroxyacylglutathione hydrolase (233 aa).

Zn(2+) is bound by residues H52, H54, D56, H57, H108, D125, and H163.

This sequence belongs to the metallo-beta-lactamase superfamily. Glyoxalase II family. In terms of assembly, monomer. The cofactor is Zn(2+).

The enzyme catalyses an S-(2-hydroxyacyl)glutathione + H2O = a 2-hydroxy carboxylate + glutathione + H(+). It functions in the pathway secondary metabolite metabolism; methylglyoxal degradation; (R)-lactate from methylglyoxal: step 2/2. In terms of biological role, thiolesterase that catalyzes the hydrolysis of S-D-lactoyl-glutathione to form glutathione and D-lactic acid. The chain is Hydroxyacylglutathione hydrolase from Actinobacillus succinogenes (strain ATCC 55618 / DSM 22257 / CCUG 43843 / 130Z).